The sequence spans 155 residues: Small ribosomal subunit protein uS7c (155 aa).

It belongs to the universal ribosomal protein uS7 family. As to quaternary structure, part of the 30S ribosomal subunit.

The protein resides in the plastid. One of the primary rRNA binding proteins, it binds directly to 16S rRNA where it nucleates assembly of the head domain of the 30S subunit. This is Small ribosomal subunit protein uS7c (rps7) from Aneura mirabilis (Parasitic liverwort).